A 365-amino-acid polypeptide reads, in one-letter code: Probable dual-specificity RNA methyltransferase RlmN (365 aa).

Residue E99 is the Proton acceptor of the active site. The 240-residue stretch at 105–344 (QSYGLSVCVT…CVVRQEHGTD (240 aa)) folds into the Radical SAM core domain. A disulfide bridge links C112 with C349. [4Fe-4S] cluster is bound by residues C119, C123, and C126. Residues 171-172 (GE), S203, 227-229 (SLH), and N305 each bind S-adenosyl-L-methionine. C349 serves as the catalytic S-methylcysteine intermediate.

The protein belongs to the radical SAM superfamily. RlmN family. [4Fe-4S] cluster is required as a cofactor.

It is found in the cytoplasm. The catalysed reaction is adenosine(2503) in 23S rRNA + 2 reduced [2Fe-2S]-[ferredoxin] + 2 S-adenosyl-L-methionine = 2-methyladenosine(2503) in 23S rRNA + 5'-deoxyadenosine + L-methionine + 2 oxidized [2Fe-2S]-[ferredoxin] + S-adenosyl-L-homocysteine. It catalyses the reaction adenosine(37) in tRNA + 2 reduced [2Fe-2S]-[ferredoxin] + 2 S-adenosyl-L-methionine = 2-methyladenosine(37) in tRNA + 5'-deoxyadenosine + L-methionine + 2 oxidized [2Fe-2S]-[ferredoxin] + S-adenosyl-L-homocysteine. Its function is as follows. Specifically methylates position 2 of adenine 2503 in 23S rRNA and position 2 of adenine 37 in tRNAs. This is Probable dual-specificity RNA methyltransferase RlmN from Lactococcus lactis subsp. cremoris (strain MG1363).